We begin with the raw amino-acid sequence, 169 residues long: MILGLALIPSKAFQDEVNAYRKRYDAHYATIMPHITIKGQFKINDGDLESVKETIKSKIEGIPTIDIHATKASNFAPITNVIYFKVEKTETLERLFNQFNNGDFYGVADHTFVPHFTIAQGLTSQEFEDIYGQLKLAGIDYKETIEQLSLVYYDEKEEKWKVLENYNLA.

The active-site Proton donor is the His34. 2 consecutive short sequence motifs (HXTX) follow at residues 34 to 37 (HITI) and 115 to 118 (HFTI). His115 serves as the catalytic Proton acceptor.

It belongs to the 2H phosphoesterase superfamily. YjcG family.

This Staphylococcus saprophyticus subsp. saprophyticus (strain ATCC 15305 / DSM 20229 / NCIMB 8711 / NCTC 7292 / S-41) protein is Putative phosphoesterase SSP1770.